The primary structure comprises 468 residues: Acetyl-CoA decarbonylase/synthase complex subunit gamma (468 aa).

The region spanning 1–60 (MKINSPLEAYKYLPQTNCGECGEATCMAFASKLIDRSGKTSDCPPLIKEKKFAKKLAELD) is the 4Fe-4S domain. The [4Fe-4S] cluster site is built by Cys18, Cys21, Cys26, and Cys43.

As to quaternary structure, heterodimer of delta and gamma chains. The ACDS complex is made up of alpha, epsilon, beta, gamma and delta chains with a probable stoichiometry of (alpha(2)epsilon(2))(4)-beta(8)-(gamma(1)delta(1))(8). Corrinoid serves as cofactor. It depends on [4Fe-4S] cluster as a cofactor.

The enzyme catalyses 5,6,7,8-tetrahydrosarcinapterin + methyl-Co(III)-[corrinoid Fe-S protein] = 5-methyltetrahydrosarcinapterin + Co(I)-[corrinoid Fe-S protein] + H(+). It participates in one-carbon metabolism; methanogenesis from acetate. In terms of biological role, part of a complex that catalyzes the reversible cleavage of acetyl-CoA, allowing growth on acetate as sole source of carbon and energy. In Methanosarcina acetivorans (strain ATCC 35395 / DSM 2834 / JCM 12185 / C2A), this protein is Acetyl-CoA decarbonylase/synthase complex subunit gamma.